Consider the following 528-residue polypeptide: MSKKLLKKERDPSILILDFGSQYSELIARRIREADVFSLVVSNFTSVKEIQDINPKGIILSGGPSSVYEDNAPKCDAKIFDLGIPILGICYGMQLMVKELGGEVTPAINKAEYGRAPINIDCESDLLSNVQDKSIMWMSHGDSINNLPEGFIKISHTENTLHAAISNKQKKLFGVQFHPEVIHSEFGMTVIKNFVYSIAKCKADWTTETFLEETIPRIKQQVGDKRVLLALSGGVDSSTLAFLLNKAIGKKLTCMFIDQGFMRKGEPEFLMEFFDKKFHIKVEYINARERFIDKLNGITDPEEKRKIIGREFIRVFEEESNRLGPFQYLAQGTLYPDVIESAGTNLDPKTGERIAVKIKSHHNVGGLPKDLQFKLVEPLRKLFKDEVRKVGGALGLPDEIIKRHPFPGPGLAIRILGDVSHEKLNCLRDADWIVRDEIKKAGLYNDIWQAFAVLLPVKTVGVMGDKRTYAWPIVLRCVSSEDGMTADWSRIPYETLERISNRIVNEVEQVNRVVFDITSKPPGTIEWE.

Residues 13–204 (SILILDFGSQ…VYSIAKCKAD (192 aa)) enclose the Glutamine amidotransferase type-1 domain. Catalysis depends on Cys-90, which acts as the Nucleophile. Active-site residues include His-178 and Glu-180. Residues 205–403 (WTTETFLEET…LGLPDEIIKR (199 aa)) form the GMPS ATP-PPase domain. 232–238 (SGGVDSS) contacts ATP.

In terms of assembly, homodimer.

The enzyme catalyses XMP + L-glutamine + ATP + H2O = GMP + L-glutamate + AMP + diphosphate + 2 H(+). Its pathway is purine metabolism; GMP biosynthesis; GMP from XMP (L-Gln route): step 1/1. Its function is as follows. Catalyzes the synthesis of GMP from XMP. This is GMP synthase [glutamine-hydrolyzing] from Prochlorococcus marinus subsp. pastoris (strain CCMP1986 / NIES-2087 / MED4).